The sequence spans 352 residues: Protein SIS1 (352 aa).

The J domain occupies 4-70 (ETKLYDLLGV…REIYDQYGLE (67 aa)). Ser275 carries the phosphoserine modification. The segment at 300–325 (VQPVQPSQTSTYPGQGMPTPKNPSQR) is disordered. The span at 301–312 (QPVQPSQTSTYP) shows a compositional bias: polar residues.

As to quaternary structure, interacts with polyadenylate-binding protein PAB1.

It localises to the cytoplasm. The protein localises to the nucleus. Its function is as follows. Required for nuclear migration during mitosis. It is required for the normal initiation of translation. Might mediate the dissociation of a specific protein complex of the translation machinery. Essential for viability. The protein is Protein SIS1 (SIS1) of Saccharomyces cerevisiae (strain ATCC 204508 / S288c) (Baker's yeast).